A 307-amino-acid chain; its full sequence is Holliday junction branch migration complex subunit RuvB (307 aa).

The interval 1–167 (MKLQIKPPNT…FGVILNINYY (167 aa)) is large ATPase domain (RuvB-L). Positions 5, 48, 51, 52, 53, 157, 167, and 204 each coordinate ATP. Residue Thr52 participates in Mg(2+) binding. Residues 168 to 233 (SNAEIEKMVS…DLEGLFKNLM (66 aa)) are small ATPAse domain (RuvB-S). The tract at residues 236 to 307 (KNGLQSIDVQ…NSGREYLVNF (72 aa)) is head domain (RuvB-H). The DNA site is built by Arg270, Lys289, and Arg294.

The protein belongs to the RuvB family. Homohexamer. Forms an RuvA(8)-RuvB(12)-Holliday junction (HJ) complex. HJ DNA is sandwiched between 2 RuvA tetramers; dsDNA enters through RuvA and exits via RuvB. An RuvB hexamer assembles on each DNA strand where it exits the tetramer. Each RuvB hexamer is contacted by two RuvA subunits (via domain III) on 2 adjacent RuvB subunits; this complex drives branch migration. In the full resolvosome a probable DNA-RuvA(4)-RuvB(12)-RuvC(2) complex forms which resolves the HJ.

It is found in the cytoplasm. It catalyses the reaction ATP + H2O = ADP + phosphate + H(+). Functionally, the RuvA-RuvB-RuvC complex processes Holliday junction (HJ) DNA during genetic recombination and DNA repair, while the RuvA-RuvB complex plays an important role in the rescue of blocked DNA replication forks via replication fork reversal (RFR). RuvA specifically binds to HJ cruciform DNA, conferring on it an open structure. The RuvB hexamer acts as an ATP-dependent pump, pulling dsDNA into and through the RuvAB complex. RuvB forms 2 homohexamers on either side of HJ DNA bound by 1 or 2 RuvA tetramers; 4 subunits per hexamer contact DNA at a time. Coordinated motions by a converter formed by DNA-disengaged RuvB subunits stimulates ATP hydrolysis and nucleotide exchange. Immobilization of the converter enables RuvB to convert the ATP-contained energy into a lever motion, pulling 2 nucleotides of DNA out of the RuvA tetramer per ATP hydrolyzed, thus driving DNA branch migration. The RuvB motors rotate together with the DNA substrate, which together with the progressing nucleotide cycle form the mechanistic basis for DNA recombination by continuous HJ branch migration. Branch migration allows RuvC to scan DNA until it finds its consensus sequence, where it cleaves and resolves cruciform DNA. The chain is Holliday junction branch migration complex subunit RuvB from Mycoplasma genitalium (strain ATCC 33530 / DSM 19775 / NCTC 10195 / G37) (Mycoplasmoides genitalium).